Consider the following 1249-residue polypeptide: MAEDSHMQKQLEFQNGSLEEGFVVRSLENEPQNMMESLSPRKYSSSLKFKANGDYSGSYLTLSQPVSAKRSPSPMGTSVRSSPSLAKIQGSKQFCDGIDKNISMKPPISFLSSAASLGGYPLGKADLDHYTGRDSERSTRLSEKPPYSRYSSRNKSHDSVYFLGGLEGRKTSGSLLTMWNGNSLSCTGSSPISRSGAASMPSSPKQVRKMNLQDHSTLQPRLSRHKEPASENVSVRTRKYSGSSLSNMGAYSRSLPRLYKATDNQMSPLSLPPRSSLGNSRRGQLGEKDLPHSLVDSDNYLNFSSLSSGASPYKTCLSEGNPYVSSALSVPASPRVARKMLLASTSSDDFDRASYSGTSPSHSFISGEPDRVLVARRNFSCGSMELDDSDLESLRQSSETPQPVLRERKSSISSISGRDDLMDYHRRQREERLREQEMERLERQRLETILSLCAEYTKPEGRRLSAGTTVADVQKINKELEKLQLSDEESVFEDALVCPDARYRCHRKGSLQDVDVAGFGNLGHSASFLAPRGSRSDELLGDLTRTPPSSSAAFLKATNESSYLSILPKTPEDIGEEQRTQELAAMEDARMVILNNLEELEQKIKDINDQMDESSRELDMECALLDGEQKSETAELMKEKEILDHLNRKITELEKNIVGEKTKEKVKLDAEREKLERLQELYSEQKTQLDNCPESMREQLQQQLKRDADLLDVESKHFEDLEFQQLEHESRLDEEKENLTQQLLREVAEYQRNIVARKEKISALKKQASHIVQQAQREQDHFVKEKNNLIMMLQREKENLCNLEKKYSSLTGGKGFPINPNTLKEGYISVNEINESCGNSTNLSPSTQFPADADAAVTEPALAVPVSQPQSSEHFRSLEERKKQHKEGLYLSDTLPRKKTTPSLSPHFSSATMGRSTTPKAHLPLGQSNSCGSVLPHSLATMTKDSESRRMLRGYNHQQMSEGQRQKPEFYSRTASESNVYLNSFHYPDRSYKDQAYDTLSLDSSDSMETSISACSPDNISSASTSNIARIEEMERLLKQAHAEKTRLLESREREMEAKKRALEEEKRRREILEKRLQEETSQRQKLIEKEVKIREKQRAQARPLTRYLPVRKEDFDLRSHVETAGHNIDTCFHVSITEKTCRGYLIKMGGKIKTWKKRWFVFDRNKRTFSYYADKHEAKLKGVIYFQAIEEVYYDHLKNANKSPNPLLTFSVKTHDRIYYMVAPSPEAMRIWMDVIVTGAEGYTHFLL.

Disordered regions lie at residues 64–85 and 128–154; these read QPVS…SPSL and DHYT…SSRN. 2 positions are modified to phosphoserine: serine 71 and serine 73. The segment covering 74–84 has biased composition (polar residues); it reads PMGTSVRSSPS. Residues 128-143 are compositionally biased toward basic and acidic residues; sequence DHYTGRDSERSTRLSE. 4 positions are modified to phosphoserine: serine 156, serine 203, serine 241, and serine 244. Disordered stretches follow at residues 190–248 and 264–289; these read SPIS…LSNM and NQMS…GEKD. Residues 231-248 are compositionally biased toward polar residues; it reads ENVSVRTRKYSGSSLSNM. The span at 267–283 shows a compositional bias: low complexity; the sequence is SPLSLPPRSSLGNSRRG. Serine 329, serine 333, serine 347, serine 380, serine 383, serine 389, serine 411, serine 416, serine 465, serine 486, and serine 510 each carry phosphoserine. A disordered region spans residues 388–424; that stretch reads DSDLESLRQSSETPQPVLRERKSSISSISGRDDLMDY. Phosphothreonine occurs at positions 546 and 570. Coiled coils occupy residues 580–692 and 718–803; these read TQEL…LDNC and FEDL…LCNL. A disordered region spans residues 866–934; that stretch reads VSQPQSSEHF…LGQSNSCGSV (69 aa). Basic and acidic residues predominate over residues 873–888; sequence EHFRSLEERKKQHKEG. Position 894 is a phosphothreonine (threonine 894). The span at 901–919 shows a compositional bias: polar residues; that stretch reads TPSLSPHFSSATMGRSTTP. A coiled-coil region spans residues 1028-1094; that stretch reads IARIEEMERL…QKLIEKEVKI (67 aa). A PH domain is found at 1139–1242; the sequence is EKTCRGYLIK…WMDVIVTGAE (104 aa).

Interacts with FLNC. Interacts with AMOTL2; interaction may facilitate PHLDB2 localization to the myotube podosome cortex that surrounds the core. Part of a cortical microtubule stabilization complex (CMSC) composed of KANK1, PPFIA1, PPFIBP1, ERC1/ELKS, PHLDB2/LL5beta, CLASPs, KIF21A and possibly additional interactors; within CMSCs KANK1 and PHLDB2/LL5beta appear to be the core components for targeting of microtubule-binding proteins KIF21A and CLASPs, whereas PPFIA1, PPFIBP1 and ERC1/ELKS serve as scaffolds for protein clustering. In terms of tissue distribution, expressed at postsynaptic membranes of skeletal neuromuscular junctions (at protein level).

Its subcellular location is the cytoplasm. It localises to the membrane. The protein localises to the cell projection. The protein resides in the podosome. It is found in the cell cortex. Its function is as follows. Seems to be involved in the assembly of the postsynaptic apparatus. May play a role in acetyl-choline receptor (AChR) aggregation in the postsynaptic membrane. This Mus musculus (Mouse) protein is Pleckstrin homology-like domain family B member 2 (Phldb2).